We begin with the raw amino-acid sequence, 110 residues long: Acylphosphatase (110 aa).

In terms of domain architecture, Acylphosphatase-like spans 21–108 (TRRYLVTGRV…TNLKSFRIEG (88 aa)). Residues Arg-36 and Asn-54 contribute to the active site.

Belongs to the acylphosphatase family.

The enzyme catalyses an acyl phosphate + H2O = a carboxylate + phosphate + H(+). The protein is Acylphosphatase (acyP) of Koribacter versatilis (strain Ellin345).